Consider the following 303-residue polypeptide: Cysteine synthase B (303 aa).

Lys-41 bears the N6-(pyridoxal phosphate)lysine mark. Residues Asn-71, 174-178 (GTTGT), and Ser-255 each bind pyridoxal 5'-phosphate.

This sequence belongs to the cysteine synthase/cystathionine beta-synthase family. The cofactor is pyridoxal 5'-phosphate.

The enzyme catalyses O-acetyl-L-serine + hydrogen sulfide = L-cysteine + acetate. It participates in amino-acid biosynthesis; L-cysteine biosynthesis; L-cysteine from L-serine: step 2/2. In terms of biological role, two cysteine synthase enzymes are found. Both catalyze the same reaction. Cysteine synthase B can also use thiosulfate in place of sulfide to give cysteine thiosulfonate as a product. This is Cysteine synthase B (cysM) from Salmonella typhimurium (strain LT2 / SGSC1412 / ATCC 700720).